A 367-amino-acid polypeptide reads, in one-letter code: UDP-N-acetylglucosamine--N-acetylmuramyl-(pentapeptide) pyrophosphoryl-undecaprenol N-acetylglucosamine transferase (367 aa).

Residues 13–15 (TGG), R168, S196, I252, and Q297 each bind UDP-N-acetyl-alpha-D-glucosamine.

Belongs to the glycosyltransferase 28 family. MurG subfamily.

It is found in the cell inner membrane. It catalyses the reaction di-trans,octa-cis-undecaprenyl diphospho-N-acetyl-alpha-D-muramoyl-L-alanyl-D-glutamyl-meso-2,6-diaminopimeloyl-D-alanyl-D-alanine + UDP-N-acetyl-alpha-D-glucosamine = di-trans,octa-cis-undecaprenyl diphospho-[N-acetyl-alpha-D-glucosaminyl-(1-&gt;4)]-N-acetyl-alpha-D-muramoyl-L-alanyl-D-glutamyl-meso-2,6-diaminopimeloyl-D-alanyl-D-alanine + UDP + H(+). It participates in cell wall biogenesis; peptidoglycan biosynthesis. In terms of biological role, cell wall formation. Catalyzes the transfer of a GlcNAc subunit on undecaprenyl-pyrophosphoryl-MurNAc-pentapeptide (lipid intermediate I) to form undecaprenyl-pyrophosphoryl-MurNAc-(pentapeptide)GlcNAc (lipid intermediate II). The polypeptide is UDP-N-acetylglucosamine--N-acetylmuramyl-(pentapeptide) pyrophosphoryl-undecaprenol N-acetylglucosamine transferase (Methylibium petroleiphilum (strain ATCC BAA-1232 / LMG 22953 / PM1)).